A 553-amino-acid chain; its full sequence is Hydroxylamine reductase (553 aa).

Residues C3, C6, C18, and C25 each contribute to the [2Fe-2S] cluster site. Hybrid [4Fe-2O-2S] cluster-binding residues include H252, E276, C320, C408, C436, C461, E495, and K497. At C408 the chain carries Cysteine persulfide.

It belongs to the HCP family. Requires [2Fe-2S] cluster as cofactor. Hybrid [4Fe-2O-2S] cluster serves as cofactor.

The protein resides in the cytoplasm. It carries out the reaction A + NH4(+) + H2O = hydroxylamine + AH2 + H(+). Catalyzes the reduction of hydroxylamine to form NH(3) and H(2)O. This is Hydroxylamine reductase from Aliivibrio fischeri (strain MJ11) (Vibrio fischeri).